Here is a 469-residue protein sequence, read N- to C-terminus: Cytochrome c biogenesis protein CcsB (469 aa).

Transmembrane regions (helical) follow at residues 30–50 (LRLA…GTVI), 89–109 (TPWF…CSLT), and 175–195 (IGPI…IWGS).

Belongs to the Ccs1/CcsB family. In terms of assembly, may interact with CcsA.

It is found in the cellular thylakoid membrane. Functionally, required during biogenesis of c-type cytochromes (cytochrome c6 and cytochrome f) at the step of heme attachment. In Synechococcus sp. (strain JA-2-3B'a(2-13)) (Cyanobacteria bacterium Yellowstone B-Prime), this protein is Cytochrome c biogenesis protein CcsB.